We begin with the raw amino-acid sequence, 273 residues long: MAIHLYKTSTPSTRNGAVDSQVKSNTRKNLIYGQPRCSKGRNARGIITAGHRGGGHKRLYRKIDFRRNERDIYGRIVSIEYDPNRNASICLIHYGDGEKRYILHPRGAIIGDTIVSGTEVPIKMGNALPLKMPLGTALHNIEITLGKGGQLARAAGAVAKLIAKEGKSATLKLPSGEVRLISNNCSATVGQVGNVGVNQKSLGRAGSKRWLGKRPVVRGVVMNPVDHPHGGGEGRAPIGRKKPATPWGYPALGRRSRKRNKYSENLILRRRSK.

Disordered regions lie at residues 1–23 (MAIH…SQVK) and 223–273 (NPVD…RRSK).

It belongs to the universal ribosomal protein uL2 family. In terms of assembly, part of the 50S ribosomal subunit.

It is found in the plastid. The protein localises to the chloroplast. This is Large ribosomal subunit protein uL2cz/uL2cy (rpl2-A) from Oenothera argillicola (Appalachian evening primrose).